The chain runs to 198 residues: Armadillo repeat-containing protein 7 (198 aa).

ARM repeat units lie at residues 57–99 (QVLD…HAGG) and 100–140 (VPLI…TATP). Ser-169 carries the phosphoserine modification.

As to quaternary structure, component of the minor spliceosome. Within this complex, interacts with RBM48.

Functionally, as a component of the minor spliceosome, involved in the splicing of U12-type introns in pre-mRNAs. The polypeptide is Armadillo repeat-containing protein 7 (ARMC7) (Homo sapiens (Human)).